The primary structure comprises 174 residues: Shikimate kinase 2 (174 aa).

12 to 17 (GCGKTT) is an ATP binding site. Thr-16 and Asp-32 together coordinate Mg(2+). Positions 34, 58, and 79 each coordinate substrate. The segment at 112-126 (QAAPEEDLRPTLTGK) is LID domain. Arg-120 is a binding site for ATP. Arg-139 provides a ligand contact to substrate.

It belongs to the shikimate kinase family. AroL subfamily. In terms of assembly, monomer. Mg(2+) serves as cofactor.

Its subcellular location is the cytoplasm. The enzyme catalyses shikimate + ATP = 3-phosphoshikimate + ADP + H(+). It functions in the pathway metabolic intermediate biosynthesis; chorismate biosynthesis; chorismate from D-erythrose 4-phosphate and phosphoenolpyruvate: step 5/7. Functionally, catalyzes the specific phosphorylation of the 3-hydroxyl group of shikimic acid using ATP as a cosubstrate. This Shigella boydii serotype 18 (strain CDC 3083-94 / BS512) protein is Shikimate kinase 2.